Here is a 953-residue protein sequence, read N- to C-terminus: Dual serine/threonine and tyrosine protein kinase (953 aa).

Residues 665-926 enclose the Protein kinase domain; the sequence is PKLEREIGRG…VQSKLQDIYT (262 aa). ATP-binding positions include 671-679 and Lys-694; that span reads IGRGQYGVV. Asp-791 acts as the Proton acceptor in catalysis. Positions 932–953 are disordered; it reads REAEGGGGGGAKEQQNLKSDTL.

This sequence belongs to the protein kinase superfamily. Ser/Thr protein kinase family.

The protein localises to the cytoplasm. It localises to the cell membrane. It is found in the apical cell membrane. Its subcellular location is the basolateral cell membrane. The protein resides in the cell junction. The enzyme catalyses L-seryl-[protein] + ATP = O-phospho-L-seryl-[protein] + ADP + H(+). It carries out the reaction L-threonyl-[protein] + ATP = O-phospho-L-threonyl-[protein] + ADP + H(+). It catalyses the reaction L-tyrosyl-[protein] + ATP = O-phospho-L-tyrosyl-[protein] + ADP + H(+). Its function is as follows. May act as a positive regulator of ERK phosphorylation downstream of fibroblast growth factor-receptor activation. May induce both caspase-dependent apoptosis and caspase-independent cell death. May play a role in the embryonic development. The protein is Dual serine/threonine and tyrosine protein kinase of Strongylocentrotus purpuratus (Purple sea urchin).